Reading from the N-terminus, the 440-residue chain is Adenylosuccinate synthetase 1, chloroplastic (440 aa).

Residues Gly13 to Lys19 and Gly41 to Thr43 each bind GTP. Asp14 (proton acceptor) is an active-site residue. Mg(2+) is bound by residues Asp14 and Gly41. Residues Asp14–Lys17, Asn39–His42, Thr135, Arg149, Gln230, Thr245, and Arg313 contribute to the IMP site. The active-site Proton donor is the His42. Thr309 to Arg315 lines the substrate pocket. Residues Arg315 and Lys341–Asp343 contribute to the GTP site.

It belongs to the adenylosuccinate synthetase family. Homodimer. The cofactor is Mg(2+).

The protein localises to the plastid. Its subcellular location is the chloroplast. The enzyme catalyses IMP + L-aspartate + GTP = N(6)-(1,2-dicarboxyethyl)-AMP + GDP + phosphate + 2 H(+). It functions in the pathway purine metabolism; AMP biosynthesis via de novo pathway; AMP from IMP: step 1/2. Its function is as follows. Plays an important role in the de novo pathway and in the salvage pathway of purine nucleotide biosynthesis. Catalyzes the first committed step in the biosynthesis of AMP from IMP. This Ricinus communis (Castor bean) protein is Adenylosuccinate synthetase 1, chloroplastic.